The primary structure comprises 511 residues: Maturase K (511 aa).

It belongs to the intron maturase 2 family. MatK subfamily.

It localises to the plastid. It is found in the chloroplast. Usually encoded in the trnK tRNA gene intron. Probably assists in splicing its own and other chloroplast group II introns. In Hordeum vulgare (Barley), this protein is Maturase K.